The following is a 595-amino-acid chain: Solute carrier family 13 member 1 (595 aa).

The next 5 helical transmembrane spans lie at 13–33 (FLFV…LHTK), 41–61 (LFVV…TALL), 77–97 (VASA…CLAT), 108–128 (IALK…LGFM), and 131–151 (TAFL…MPIA). N-linked (GlcNAc...) asparagine glycosylation is found at asparagine 174 and asparagine 207. 8 consecutive transmembrane segments (helical) span residues 239–259 (LTCL…ITGT), 290–310 (PAAL…FLGF), 348–368 (IVTL…DPGF), 381–401 (GFAT…LIPA), 464–484 (PLGS…VTSL), 491–511 (PATI…IHVN), 512–532 (PLYI…LPVA), and 554–574 (GLGV…TWIV). An N-linked (GlcNAc...) asparagine glycan is attached at asparagine 591.

Belongs to the SLC13A/DASS transporter (TC 2.A.47) family. NADC subfamily. Highly expressed in kidney; not detectable in the other tissues tested.

It localises to the apical cell membrane. It carries out the reaction sulfate(out) + 3 Na(+)(out) = sulfate(in) + 3 Na(+)(in). The catalysed reaction is selenate(out) + 3 Na(+)(out) = selenate(in) + 3 Na(+)(in). The enzyme catalyses thiosulfate(out) + 3 Na(+)(out) = thiosulfate(in) + 3 Na(+)(in). Its activity is regulated as follows. Inhibited by thiosulfate, selenate, molybdate, tungstate, citrate and succinate. Its function is as follows. Sodium:sulfate symporter that mediates sulfate reabsorption in the kidney and small intestine. Can also mediate the transport of selenate and thiosulfate. In Homo sapiens (Human), this protein is Solute carrier family 13 member 1 (SLC13A1).